A 575-amino-acid polypeptide reads, in one-letter code: Carboxylesterase 5A (575 aa).

An N-terminal signal peptide occupies residues Met-1 to Ala-27. A glycan (N-linked (GlcNAc...) asparagine) is linked at Asn-82. Residues Cys-94 and Cys-121 are joined by a disulfide bond. Ser-226 (acyl-ester intermediate) is an active-site residue. A disulfide bridge connects residues Cys-280 and Cys-291. Asn-281 carries an N-linked (GlcNAc...) asparagine glycan. The active-site Charge relay system is the Glu-345. Asn-363 is a glycosylation site (N-linked (GlcNAc...) asparagine). His-454 (charge relay system) is an active-site residue. A glycan (N-linked (GlcNAc...) asparagine) is linked at Asn-524.

The protein belongs to the type-B carboxylesterase/lipase family. N-glycosylated.

Its subcellular location is the secreted. It catalyses the reaction a carboxylic ester + H2O = an alcohol + a carboxylate + H(+). Functionally, involved in the detoxification of xenobiotics and in the activation of ester and amide prodrugs. In Canis lupus familiaris (Dog), this protein is Carboxylesterase 5A (CES5A).